Reading from the N-terminus, the 509-residue chain is Phosphoglycerate kinase, glycosomal (509 aa).

Val32, Asp33, Phe34, Asn35, Arg48, Ser70, His71, Gly73, Arg74, Arg224, His260, and Arg261 together coordinate (2R)-3-phosphoglycerate. Residue Gly306 coordinates ADP. Gly306 lines the CDP pocket. Lys308 provides a ligand contact to (2R)-3-phosphoglycerate. Position 308 (Lys308) interacts with AMP. Position 311 (Asp311) interacts with CDP. Asp311 lines the Mg(2+) pocket. ADP is bound by residues Lys312 and Gly330. Lys312 is a binding site for AMP. ATP is bound at residue Lys312. Gly330 is a CDP binding site. Residues Ala331 and Ala403 each coordinate AMP. ATP-binding residues include Ala331 and Ala403. 2 residues coordinate ADP: Ala403 and Asn427. CDP contacts are provided by Gly428 and Phe433. Positions 433, 434, 466, and 467 each coordinate ADP. Glu434 serves as a coordination point for AMP. Glu434, Asp466, and Ser467 together coordinate ATP. Asp466 contributes to the Mg(2+) binding site.

It belongs to the phosphoglycerate kinase family. In terms of assembly, monomer. Mg(2+) serves as cofactor.

The protein localises to the glycosome. The catalysed reaction is (2R)-3-phosphoglycerate + ATP = (2R)-3-phospho-glyceroyl phosphate + ADP. It participates in carbohydrate degradation; glycolysis; pyruvate from D-glyceraldehyde 3-phosphate: step 2/5. This is Phosphoglycerate kinase, glycosomal (56PGK) from Trypanosoma congolense.